Consider the following 382-residue polypeptide: Chorismate synthase (382 aa).

NADP(+) contacts are provided by arginine 39 and arginine 45. Residues 89 to 113 form a disordered region; the sequence is SPEPGGEPRKKALTDARPGHADLTG. Over residues 94-108 the composition is skewed to basic and acidic residues; it reads GEPRKKALTDARPGH. Residues 128–130, 246–247, alanine 290, 305–309, and arginine 331 each bind FMN; these read RAS, QA, and KPIAT.

It belongs to the chorismate synthase family. Homotetramer. FMNH2 is required as a cofactor.

The enzyme catalyses 5-O-(1-carboxyvinyl)-3-phosphoshikimate = chorismate + phosphate. It functions in the pathway metabolic intermediate biosynthesis; chorismate biosynthesis; chorismate from D-erythrose 4-phosphate and phosphoenolpyruvate: step 7/7. In terms of biological role, catalyzes the anti-1,4-elimination of the C-3 phosphate and the C-6 proR hydrogen from 5-enolpyruvylshikimate-3-phosphate (EPSP) to yield chorismate, which is the branch point compound that serves as the starting substrate for the three terminal pathways of aromatic amino acid biosynthesis. This reaction introduces a second double bond into the aromatic ring system. The protein is Chorismate synthase of Deinococcus radiodurans (strain ATCC 13939 / DSM 20539 / JCM 16871 / CCUG 27074 / LMG 4051 / NBRC 15346 / NCIMB 9279 / VKM B-1422 / R1).